A 74-amino-acid chain; its full sequence is ATP synthase subunit c (74 aa).

2 helical membrane passes run Ile9 to Phe29 and Phe54 to Val74.

This sequence belongs to the ATPase C chain family. F-type ATPases have 2 components, F(1) - the catalytic core - and F(0) - the membrane proton channel. F(1) has five subunits: alpha(3), beta(3), gamma(1), delta(1), epsilon(1). F(0) has three main subunits: a(1), b(2) and c(10-14). The alpha and beta chains form an alternating ring which encloses part of the gamma chain. F(1) is attached to F(0) by a central stalk formed by the gamma and epsilon chains, while a peripheral stalk is formed by the delta and b chains.

Its subcellular location is the cell inner membrane. F(1)F(0) ATP synthase produces ATP from ADP in the presence of a proton or sodium gradient. F-type ATPases consist of two structural domains, F(1) containing the extramembraneous catalytic core and F(0) containing the membrane proton channel, linked together by a central stalk and a peripheral stalk. During catalysis, ATP synthesis in the catalytic domain of F(1) is coupled via a rotary mechanism of the central stalk subunits to proton translocation. Functionally, key component of the F(0) channel; it plays a direct role in translocation across the membrane. A homomeric c-ring of between 10-14 subunits forms the central stalk rotor element with the F(1) delta and epsilon subunits. The chain is ATP synthase subunit c from Gluconacetobacter diazotrophicus (strain ATCC 49037 / DSM 5601 / CCUG 37298 / CIP 103539 / LMG 7603 / PAl5).